The sequence spans 179 residues: Large ribosomal subunit protein uL5 (179 aa).

This sequence belongs to the universal ribosomal protein uL5 family. Part of the 50S ribosomal subunit; part of the 5S rRNA/L5/L18/L25 subcomplex. Contacts the 5S rRNA and the P site tRNA. Forms a bridge to the 30S subunit in the 70S ribosome.

Its function is as follows. This is one of the proteins that bind and probably mediate the attachment of the 5S RNA into the large ribosomal subunit, where it forms part of the central protuberance. In the 70S ribosome it contacts protein S13 of the 30S subunit (bridge B1b), connecting the 2 subunits; this bridge is implicated in subunit movement. Contacts the P site tRNA; the 5S rRNA and some of its associated proteins might help stabilize positioning of ribosome-bound tRNAs. The polypeptide is Large ribosomal subunit protein uL5 (Tolumonas auensis (strain DSM 9187 / NBRC 110442 / TA 4)).